The sequence spans 131 residues: Large ribosomal subunit protein bL17 (131 aa).

Belongs to the bacterial ribosomal protein bL17 family. Part of the 50S ribosomal subunit. Contacts protein L32.

This chain is Large ribosomal subunit protein bL17, found in Hamiltonella defensa subsp. Acyrthosiphon pisum (strain 5AT).